The following is a 454-amino-acid chain: Phosphoglucosamine mutase (454 aa).

Ser-101 (phosphoserine intermediate) is an active-site residue. Mg(2+)-binding residues include Ser-101, Asp-243, Asp-245, and Asp-247. The residue at position 101 (Ser-101) is a Phosphoserine.

The protein belongs to the phosphohexose mutase family. Mg(2+) serves as cofactor. In terms of processing, activated by phosphorylation.

It catalyses the reaction alpha-D-glucosamine 1-phosphate = D-glucosamine 6-phosphate. Catalyzes the conversion of glucosamine-6-phosphate to glucosamine-1-phosphate. The polypeptide is Phosphoglucosamine mutase (Citrifermentans bemidjiense (strain ATCC BAA-1014 / DSM 16622 / JCM 12645 / Bem) (Geobacter bemidjiensis)).